An 842-amino-acid chain; its full sequence is Glycogen phosphorylase, muscle form (842 aa).

Position 2 is an N-acetylserine (Ser2). Residue Ser15 is modified to Phosphoserine; by PHK; in form phosphorylase A. The AMP site is built by Asp43 and Tyr76. 2 positions are modified to phosphotyrosine: Tyr204 and Tyr227. Position 310 to 319 (310 to 319 (RRFKSSKFGC)) interacts with AMP. Ser430 is modified (phosphoserine). Tyr473 carries the post-translational modification Phosphotyrosine. Ser514 carries the phosphoserine modification. The residue at position 681 (Lys681) is an N6-(pyridoxal phosphate)lysine. Ser747 and Ser748 each carry phosphoserine.

It belongs to the glycogen phosphorylase family. In terms of assembly, homodimer. Homotetramer; to form the enzymatically active phosphorylase A. Pyridoxal 5'-phosphate serves as cofactor. Post-translationally, phosphorylation of Ser-15 converts phosphorylase B (unphosphorylated) to phosphorylase A.

The catalysed reaction is [(1-&gt;4)-alpha-D-glucosyl](n) + phosphate = [(1-&gt;4)-alpha-D-glucosyl](n-1) + alpha-D-glucose 1-phosphate. Allosterically regulated through the non-covalent binding of metabolites, being activated by AMP and inhibited by ATP, ADP, and glucose-6-phosphate. The activity is also controlled by post-translational modifications including phosphorylation. Allosteric enzyme that catalyzes the rate-limiting step in glycogen catabolism, the phosphorolytic cleavage of glycogen to produce glucose-1-phosphate, and plays a central role in maintaining cellular and organismal glucose homeostasis. The protein is Glycogen phosphorylase, muscle form of Homo sapiens (Human).